Reading from the N-terminus, the 187-residue chain is uncharacterized protein (187 aa).

The tract at residues 42-63 (RTNGPGKDSFSFSTSGSKPSSS) is disordered. A compositionally biased stretch (low complexity) spans 50 to 63 (SFSFSTSGSKPSSS).

This is an uncharacterized protein from Saccharomyces cerevisiae (strain ATCC 204508 / S288c) (Baker's yeast).